A 239-amino-acid chain; its full sequence is Ribonuclease 3 (239 aa).

In terms of domain architecture, RNase III spans 12–137 (REKVEAVIGY…LIAAIYLDAG (126 aa)). E50 is a binding site for Mg(2+). Residue D54 is part of the active site. Mg(2+) contacts are provided by D123 and E126. The active site involves E126. Residues 162–231 (DAKTELQEWA…ATRLLEREGV (70 aa)) enclose the DRBM domain.

The protein belongs to the ribonuclease III family. As to quaternary structure, homodimer. It depends on Mg(2+) as a cofactor.

It localises to the cytoplasm. It catalyses the reaction Endonucleolytic cleavage to 5'-phosphomonoester.. Digests double-stranded RNA. Involved in the processing of primary rRNA transcript to yield the immediate precursors to the large and small rRNAs (23S and 16S). Processes some mRNAs, and tRNAs when they are encoded in the rRNA operon. Processes pre-crRNA and tracrRNA of type II CRISPR loci if present in the organism. In Allorhizobium ampelinum (strain ATCC BAA-846 / DSM 112012 / S4) (Agrobacterium vitis (strain S4)), this protein is Ribonuclease 3.